We begin with the raw amino-acid sequence, 358 residues long: Membrane-bound lytic murein transglycosylase C (358 aa).

Positions 1–16 are cleaved as a signal peptide; that stretch reads MKKILALLVIAPLLVS. Cysteine 17 carries the N-palmitoyl cysteine lipid modification. The S-diacylglycerol cysteine moiety is linked to residue cysteine 17.

It belongs to the transglycosylase Slt family.

It localises to the cell outer membrane. The enzyme catalyses Exolytic cleavage of the (1-&gt;4)-beta-glycosidic linkage between N-acetylmuramic acid (MurNAc) and N-acetylglucosamine (GlcNAc) residues in peptidoglycan, from either the reducing or the non-reducing ends of the peptidoglycan chains, with concomitant formation of a 1,6-anhydrobond in the MurNAc residue.. Functionally, murein-degrading enzyme. May play a role in recycling of muropeptides during cell elongation and/or cell division. The protein is Membrane-bound lytic murein transglycosylase C of Yersinia enterocolitica serotype O:8 / biotype 1B (strain NCTC 13174 / 8081).